A 338-amino-acid polypeptide reads, in one-letter code: 3-keto-steroid reductase erg27 (338 aa).

Positions 16, 44, 50, and 75 each coordinate NADP(+). Active-site proton donor residues include Ser-180 and Tyr-203. NADP(+) contacts are provided by Tyr-203, Lys-207, and Thr-236. Catalysis depends on Lys-207, which acts as the Lowers pKa of active site Tyr.

It belongs to the short-chain dehydrogenases/reductases (SDR) family. ERG27 subfamily. Heterotetramer of erg25, erg26, erg27 and erg28. Erg28 acts as a scaffold to tether erg27 and other 4,4-demethylation-related enzymes, forming a demethylation enzyme complex, in the endoplasmic reticulum.

The catalysed reaction is 3-dehydro-4alpha-methylzymosterol + NADPH + H(+) = 4alpha-methylzymosterol + NADP(+). Its pathway is steroid biosynthesis; zymosterol biosynthesis; zymosterol from lanosterol: step 5/6. It participates in steroid metabolism; ergosterol biosynthesis. Its function is as follows. 3-keto-steroid reductase; part of the third module of ergosterol biosynthesis pathway that includes by the late steps of the pathway. Erg27 is a catalytic component of the C-4 demethylation complex that catalyze the reduction of the keto group on the C-3. The third module or late pathway involves the ergosterol synthesis itself through consecutive reactions that mainly occur in the endoplasmic reticulum (ER) membrane. Firstly, the squalene synthase erg9 catalyzes the condensation of 2 farnesyl pyrophosphate moieties to form squalene, which is the precursor of all steroids. Secondly, squalene is converted into lanosterol by the consecutive action of the squalene epoxidase erg1 and the lanosterol synthase erg7. The lanosterol 14-alpha-demethylase erg11/cyp1 catalyzes C14-demethylation of lanosterol to produce 4,4'-dimethyl cholesta-8,14,24-triene-3-beta-ol. In the next steps, a complex process involving various demethylation, reduction and desaturation reactions catalyzed by the C-14 reductase erg24 and the C-4 demethylation complex erg25-erg26-erg27 leads to the production of zymosterol. Erg28 likely functions in the C-4 demethylation complex reaction by tethering erg26 and Erg27 to the endoplasmic reticulum or to facilitate interaction between these proteins. Then, the sterol 24-C-methyltransferase erg6 catalyzes the methyl transfer from S-adenosyl-methionine to the C-24 of zymosterol to form fecosterol. The C-8 sterol isomerase erg2 catalyzes the reaction which results in unsaturation at C-7 in the B ring of sterols and thus converts fecosterol to episterol. The sterol-C5-desaturases erg31 and erg32 then catalyze the introduction of a C-5 double bond in the B ring to produce 5-dehydroepisterol. The C-22 sterol desaturase erg5 further converts 5-dehydroepisterol into ergosta-5,7,22,24(28)-tetraen-3beta-ol by forming the C-22(23) double bond in the sterol side chain. Finally, ergosta-5,7,22,24(28)-tetraen-3beta-ol is substrate of the C-24(28) sterol reductase erg4 to produce ergosterol. In the genus Schizosaccharomyces, a second route exists between lanosterol and fecosterol, via the methylation of lanosterol to eburicol by erg6, followed by C14-demethylation by erg11/cyp1 and C4-demethylation by the demethylation complex erg25-erg26-erg27. This Schizosaccharomyces pombe (strain 972 / ATCC 24843) (Fission yeast) protein is 3-keto-steroid reductase erg27.